We begin with the raw amino-acid sequence, 360 residues long: S-adenosylmethionine:tRNA ribosyltransferase-isomerase (360 aa).

It belongs to the QueA family. In terms of assembly, monomer.

The protein localises to the cytoplasm. It carries out the reaction 7-aminomethyl-7-carbaguanosine(34) in tRNA + S-adenosyl-L-methionine = epoxyqueuosine(34) in tRNA + adenine + L-methionine + 2 H(+). The protein operates within tRNA modification; tRNA-queuosine biosynthesis. Transfers and isomerizes the ribose moiety from AdoMet to the 7-aminomethyl group of 7-deazaguanine (preQ1-tRNA) to give epoxyqueuosine (oQ-tRNA). The sequence is that of S-adenosylmethionine:tRNA ribosyltransferase-isomerase from Rhizobium meliloti (strain 1021) (Ensifer meliloti).